The primary structure comprises 337 residues: 1-aminocyclopropane-1-carboxylate deaminase (337 aa).

An N6-(pyridoxal phosphate)lysine modification is found at lysine 50. Serine 77 (nucleophile) is an active-site residue.

The protein belongs to the ACC deaminase/D-cysteine desulfhydrase family. As to quaternary structure, homotrimer. Requires pyridoxal 5'-phosphate as cofactor.

The catalysed reaction is 1-aminocyclopropane-1-carboxylate + H2O = 2-oxobutanoate + NH4(+). In terms of biological role, catalyzes a cyclopropane ring-opening reaction, the irreversible conversion of 1-aminocyclopropane-1-carboxylate (ACC) to ammonia and alpha-ketobutyrate. Allows growth on ACC as a nitrogen source. The protein is 1-aminocyclopropane-1-carboxylate deaminase of Bradyrhizobium diazoefficiens (strain JCM 10833 / BCRC 13528 / IAM 13628 / NBRC 14792 / USDA 110).